We begin with the raw amino-acid sequence, 198 residues long: Glycerol-3-phosphate acyltransferase 2 (198 aa).

4 consecutive transmembrane segments (helical) span residues 4 to 24 (TYLL…LVVG), 71 to 91 (LPII…AVLG), 113 to 133 (LLCY…SLLF), and 147 to 167 (VVAV…AMCL).

This sequence belongs to the PlsY family. Probably interacts with PlsX.

It localises to the cell membrane. The catalysed reaction is an acyl phosphate + sn-glycerol 3-phosphate = a 1-acyl-sn-glycero-3-phosphate + phosphate. It participates in lipid metabolism; phospholipid metabolism. In terms of biological role, catalyzes the transfer of an acyl group from acyl-phosphate (acyl-PO(4)) to glycerol-3-phosphate (G3P) to form lysophosphatidic acid (LPA). This enzyme utilizes acyl-phosphate as fatty acyl donor, but not acyl-CoA or acyl-ACP. The protein is Glycerol-3-phosphate acyltransferase 2 of Bacillus cereus (strain ATCC 10987 / NRS 248).